The following is an 874-amino-acid chain: UPF0182 protein Sfum_2137 (874 aa).

7 consecutive transmembrane segments (helical) span residues 7–27 (WPLIILIGILGISAVVILSSL), 57–77 (IVFGAVTLLFFLIFFLNFWVA), 110–130 (SLWVYTPLSLILAVIIALPIF), 171–191 (RRLLIAFVLLLVGLVALYLLE), 208–228 (LHLSILILLIFLIETWDYVLQ), 252–272 (VIWALIWLTLFFLMGTAFSMI), and 283–303 (PLVVFAVGFVLVLGLRYSAFL).

This sequence belongs to the UPF0182 family.

It is found in the cell membrane. The sequence is that of UPF0182 protein Sfum_2137 from Syntrophobacter fumaroxidans (strain DSM 10017 / MPOB).